The sequence spans 430 residues: Alpha-humulene synthase asR6 (430 aa).

The protein belongs to the terpene synthase family. Alpha-humulene synthase eupE subfamily. Mg(2+) serves as cofactor.

The enzyme catalyses (2E,6E)-farnesyl diphosphate = alpha-humulene + diphosphate. The protein operates within secondary metabolite biosynthesis; terpenoid biosynthesis. In terms of biological role, alpha-humulene synthase; part of the gene cluster that mediates the biosynthesis of xenovulene A, an unusual meroterpenoid that has potent inhibitory effects on the human gamma-aminobutyrate A (GABAA) benzodiazepine receptor. The first step of xenovulene A biosynthesis is the biosynthesis of 3-methylorcinaldehyde performed by the non-reducing polyketide synthase aspks1. The salicylate hydroxylase asL1 then catalyzes the oxidative dearomatization of 3-methylorcinaldehyde to yield a dearomatized hydroxycyclohexadione. The 2-oxoglutarate-dependent dioxygenase asL3 further catalyzes the oxidative ring expansion to provide the first tropolone metabolite. The cytochrome P450 monooxygenase asR2 allows the synthesis of tropolone hemiacetal. In parallel, a previously unrecognised class of terpene cyclase, asR6, produces alpha-humulene from farnesylpyrophosphate (FPP). The putative Diels-Alderase asR5 probably catalyzes the formation of the tropolone-humulene skeleton by linking humulene and the polyketide moiety. Oxidative-ring contractions catalyzed by asL4 and asL6 then processively remove carbon atoms from the polyketide to yield xenovulene A. This is Alpha-humulene synthase asR6 from Sarocladium schorii (Acremonium strictum (strain IMI 501407)).